The primary structure comprises 384 residues: Dual specificity protein phosphatase 5 (384 aa).

The Rhodanese domain maps to 19–141 (AEARCVVLDC…FYSQYPECCV (123 aa)). Residues 53–74 (RRARGGAVSARYVLADEAARAR) carry the Nuclear localization signal motif. The region spanning 178 to 319 (GPVEILPFLY…LLQYESEILP (142 aa)) is the Tyrosine-protein phosphatase domain. C263 functions as the Phosphocysteine intermediate in the catalytic mechanism.

This sequence belongs to the protein-tyrosine phosphatase family. Non-receptor class dual specificity subfamily.

It localises to the nucleus. The enzyme catalyses O-phospho-L-tyrosyl-[protein] + H2O = L-tyrosyl-[protein] + phosphate. It carries out the reaction O-phospho-L-seryl-[protein] + H2O = L-seryl-[protein] + phosphate. The catalysed reaction is O-phospho-L-threonyl-[protein] + H2O = L-threonyl-[protein] + phosphate. Dual specificity protein phosphatase; active with phosphotyrosine, phosphoserine and phosphothreonine residues. The highest relative activity is toward ERK1. This Rattus norvegicus (Rat) protein is Dual specificity protein phosphatase 5 (Dusp5).